The following is a 494-amino-acid chain: ATP-dependent RNA helicase HAS1 (494 aa).

The segment at 1-23 (MAQTKRSRDESEKEEVVVKADVE) is disordered. A Q motif motif is present at residues 29–57 (HSFKSLNLSQPTMRAIEKMGFSKMTPVQA). In terms of domain architecture, Helicase ATP-binding spans 60–236 (IPPLMAGRDV…RISLRPGPLF (177 aa)). An ATP-binding site is contributed by 73 to 80 (AKTGSGKT). A DEAD box motif is present at residues 183-186 (DEAD). Positions 250 to 420 (GLEQGYVVCE…NVQSQLEKLI (171 aa)) constitute a Helicase C-terminal domain. Positions 262–278 (KRFLLLFSFLKRNQKKK) match the Bipartite nuclear localization signal motif.

The protein belongs to the DEAD box helicase family. DDX18/HAS1 subfamily. As to quaternary structure, associates in the nucleolus with the 60S and pre-60S ribosomal subunits.

It localises to the nucleus. Its subcellular location is the nucleolus. The catalysed reaction is ATP + H2O = ADP + phosphate + H(+). In terms of biological role, ATP-dependent RNA helicase involved in 40S ribosomal subunit biogenesis. Required for the processing and cleavage of 35S pre-rRNA at sites A0, A1, and A2, leading to mature 18S rRNA. This Candida glabrata (strain ATCC 2001 / BCRC 20586 / JCM 3761 / NBRC 0622 / NRRL Y-65 / CBS 138) (Yeast) protein is ATP-dependent RNA helicase HAS1 (HAS1).